We begin with the raw amino-acid sequence, 570 residues long: Periplasmic trehalase (570 aa).

An N-terminal signal peptide occupies residues 1 to 34 (MIPPEIRRSVLLQKAIKLALAGTLLTFASFSATA). Residues Arg159, 166-167 (WD), Asn203, 212-214 (RSQ), 284-286 (RPE), and Gly317 contribute to the substrate site. Residues Asp319 and Glu503 each act as proton donor/acceptor in the active site. A substrate-binding site is contributed by Glu518. The tract at residues 544 to 570 (KPCDSVPSTRPASLSATPTKTPSAATQ) is disordered. The span at 554–570 (PASLSATPTKTPSAATQ) shows a compositional bias: low complexity.

Belongs to the glycosyl hydrolase 37 family. Monomer.

Its subcellular location is the periplasm. The catalysed reaction is alpha,alpha-trehalose + H2O = alpha-D-glucose + beta-D-glucose. Provides the cells with the ability to utilize trehalose at high osmolarity by splitting it into glucose molecules that can subsequently be taken up by the phosphotransferase-mediated uptake system. This Salmonella newport (strain SL254) protein is Periplasmic trehalase.